The primary structure comprises 35 residues: Potassium channel toxin (35 aa).

3 disulfides stabilise this stretch: cysteine 6–cysteine 25, cysteine 11–cysteine 30, and cysteine 15–cysteine 32.

This sequence belongs to the short scorpion toxin superfamily. Potassium channel inhibitor family. Alpha-KTx 21 subfamily. In terms of tissue distribution, expressed by the venom gland.

The protein resides in the secreted. In terms of biological role, toxin that blocks voltage-gated potassium channels (Kv). The chain is Potassium channel toxin from Tityus metuendus (Scorpion).